A 271-amino-acid chain; its full sequence is Keratin-associated protein 10-5 (271 aa).

22 repeat units span residues C26 to P30, C51 to A55, C73 to A77, C78 to S82, C88 to V92, C93 to V97, C98 to T102, C110 to S114, C120 to S124, C130 to V134, C135 to V139, C140 to T144, C152 to S156, C162 to S166, C177 to V181, C187 to V191, C199 to S203, C209 to S213, C214 to S218, C233 to I237, C240 to A244, and C251 to A255. A 22 X 5 AA repeats of C-C-X(3) region spans residues C26–A255.

Belongs to the KRTAP type 10 family. Interacts with hair keratins. In terms of tissue distribution, restricted to a narrow region of the hair fiber cuticle, lying approximately 20 cell layers above the apex of the dermal papilla of the hair root; not detected in any other tissues.

In the hair cortex, hair keratin intermediate filaments are embedded in an interfilamentous matrix, consisting of hair keratin-associated proteins (KRTAP), which are essential for the formation of a rigid and resistant hair shaft through their extensive disulfide bond cross-linking with abundant cysteine residues of hair keratins. The matrix proteins include the high-sulfur and high-glycine-tyrosine keratins. This chain is Keratin-associated protein 10-5 (KRTAP10-5), found in Homo sapiens (Human).